Here is an 82-residue protein sequence, read N- to C-terminus: Defensin-like protein 156 (82 aa).

The N-terminal stretch at 1 to 27 is a signal peptide; the sequence is MAKISCSYFLVLMLVFSVFSLVEKTKG. 4 cysteine pairs are disulfide-bonded: cysteine 31–cysteine 77, cysteine 41–cysteine 60, cysteine 46–cysteine 71, and cysteine 50–cysteine 73.

It belongs to the DEFL family. As to expression, expressed in flower buds, but not in stems, roots or rosette leaves.

It localises to the secreted. The polypeptide is Defensin-like protein 156 (LCR21) (Arabidopsis thaliana (Mouse-ear cress)).